A 318-amino-acid chain; its full sequence is Putative 2-hydroxyacid dehydrogenase SSP0606 (318 aa).

NAD(+) is bound by residues E156–I157, A235–R237, and D261. R237 is a catalytic residue. E266 is a catalytic residue. H284 serves as the catalytic Proton donor. H284–N287 provides a ligand contact to NAD(+).

The protein belongs to the D-isomer specific 2-hydroxyacid dehydrogenase family.

In Staphylococcus saprophyticus subsp. saprophyticus (strain ATCC 15305 / DSM 20229 / NCIMB 8711 / NCTC 7292 / S-41), this protein is Putative 2-hydroxyacid dehydrogenase SSP0606.